Consider the following 204-residue polypeptide: MSRYLGPRFKIIRRLKTLPGLTSKRPKYKKRVRRSSRPWWKKSRHLACLQEKQKIRFHFGLTERQLRQYVQITKKVQGSTGQVLLQLLEMRLDNILYRLGLAGTIPGARQLVNHRHILVNDHVVNIPSYQCKPQDVITIKGKKTDQLKTIITRNRNKARENKIPYHLTLDLSQNKGIVNKIIDRKDIQLNIKEMLVIEYYSRRI.

The region spanning 90–150 is the S4 RNA-binding domain; sequence MRLDNILYRL…GKKTDQLKTI (61 aa).

Belongs to the universal ribosomal protein uS4 family. Part of the 30S ribosomal subunit. Contacts protein S5. The interaction surface between S4 and S5 is involved in control of translational fidelity.

The protein resides in the plastid. It localises to the chloroplast. Its function is as follows. One of the primary rRNA binding proteins, it binds directly to 16S rRNA where it nucleates assembly of the body of the 30S subunit. Functionally, with S5 and S12 plays an important role in translational accuracy. This chain is Small ribosomal subunit protein uS4c (rps4), found in Gnetum parvifolium (Small-leaved jointfir).